Reading from the N-terminus, the 156-residue chain is Putative NrdI-like protein (156 aa).

The protein belongs to the NrdI family.

This chain is Putative NrdI-like protein, found in Streptococcus pneumoniae serotype 4 (strain ATCC BAA-334 / TIGR4).